Here is a 341-residue protein sequence, read N- to C-terminus: Ribosomal RNA small subunit methyltransferase H (341 aa).

S-adenosyl-L-methionine is bound by residues 47 to 49 (GGY), Asp64, Phe91, Asp109, and Gln116.

This sequence belongs to the methyltransferase superfamily. RsmH family.

It localises to the cytoplasm. It carries out the reaction cytidine(1402) in 16S rRNA + S-adenosyl-L-methionine = N(4)-methylcytidine(1402) in 16S rRNA + S-adenosyl-L-homocysteine + H(+). In terms of biological role, specifically methylates the N4 position of cytidine in position 1402 (C1402) of 16S rRNA. The protein is Ribosomal RNA small subunit methyltransferase H of Agrobacterium fabrum (strain C58 / ATCC 33970) (Agrobacterium tumefaciens (strain C58)).